We begin with the raw amino-acid sequence, 284 residues long: Bifunctional protein FolD (284 aa).

Residues 165 to 167 and S190 contribute to the NADP(+) site; that span reads GRS.

This sequence belongs to the tetrahydrofolate dehydrogenase/cyclohydrolase family. Homodimer.

The enzyme catalyses (6R)-5,10-methylene-5,6,7,8-tetrahydrofolate + NADP(+) = (6R)-5,10-methenyltetrahydrofolate + NADPH. It catalyses the reaction (6R)-5,10-methenyltetrahydrofolate + H2O = (6R)-10-formyltetrahydrofolate + H(+). The protein operates within one-carbon metabolism; tetrahydrofolate interconversion. Catalyzes the oxidation of 5,10-methylenetetrahydrofolate to 5,10-methenyltetrahydrofolate and then the hydrolysis of 5,10-methenyltetrahydrofolate to 10-formyltetrahydrofolate. This chain is Bifunctional protein FolD, found in Streptococcus uberis (strain ATCC BAA-854 / 0140J).